We begin with the raw amino-acid sequence, 232 residues long: Urease accessory protein UreF (232 aa).

This sequence belongs to the UreF family. In terms of assembly, ureD, UreF and UreG form a complex that acts as a GTP-hydrolysis-dependent molecular chaperone, activating the urease apoprotein by helping to assemble the nickel containing metallocenter of UreC. The UreE protein probably delivers the nickel.

Its subcellular location is the cytoplasm. In terms of biological role, required for maturation of urease via the functional incorporation of the urease nickel metallocenter. The chain is Urease accessory protein UreF from Trichodesmium erythraeum (strain IMS101).